Reading from the N-terminus, the 153-residue chain is Aspartate carbamoyltransferase regulatory chain (153 aa).

4 residues coordinate Zn(2+): C109, C114, C138, and C141.

Belongs to the PyrI family. Contains catalytic and regulatory chains. Zn(2+) is required as a cofactor.

Involved in allosteric regulation of aspartate carbamoyltransferase. This Vibrio vulnificus (strain CMCP6) protein is Aspartate carbamoyltransferase regulatory chain.